We begin with the raw amino-acid sequence, 207 residues long: Small ribosomal subunit protein uS7y (207 aa).

Alanine 2 is modified (N-acetylalanine).

This sequence belongs to the universal ribosomal protein uS7 family. In terms of tissue distribution, expressed in root tips, lateral root primordia, leaf primordia, shoot apical meristem and vasculature of cotyledons.

In Arabidopsis thaliana (Mouse-ear cress), this protein is Small ribosomal subunit protein uS7y.